Here is a 510-residue protein sequence, read N- to C-terminus: Histone deacetylase 3 (510 aa).

Residues 24-338 are histone deacetylase; sequence RRVCYFYDPE…WCYETGVALG (315 aa). H158 (proton donor/acceptor) is an active-site residue. Positions 193, 195, and 281 each coordinate Zn(2+). Residues 394-510 are disordered; that stretch reads PSVQFQERIP…ARNEPGSSPK (117 aa). Basic and acidic residues-rich tracts occupy residues 418–434 and 448–472; these read DERH…DHKP and VKRE…HKGP. A compositionally biased stretch (low complexity) spans 485–503; it reads APTADANAVAVNAPGNARN.

It belongs to the histone deacetylase family. HD Type 1 subfamily. Zn(2+) is required as a cofactor. In terms of tissue distribution, expressed in roots.

The protein resides in the nucleus. The enzyme catalyses N(6)-acetyl-L-lysyl-[histone] + H2O = L-lysyl-[histone] + acetate. Functionally, responsible for the deacetylation of lysine residues on the N-terminal part of the core histones (H2A, H2B, H3 and H4). Histone deacetylation gives a tag for epigenetic repression and plays an important role in transcriptional regulation, cell cycle progression and developmental events. Histone deacetylases act via the formation of large multiprotein complexes. The chain is Histone deacetylase 3 from Oryza sativa subsp. japonica (Rice).